The chain runs to 244 residues: Methylthioribulose-1-phosphate dehydratase (244 aa).

Cys-89 is a binding site for substrate. Residues His-107 and His-109 each coordinate Zn(2+). The active-site Proton donor/acceptor is the Glu-130. His-192 contributes to the Zn(2+) binding site.

Belongs to the aldolase class II family. MtnB subfamily. It depends on Zn(2+) as a cofactor.

It localises to the cytoplasm. It catalyses the reaction 5-(methylsulfanyl)-D-ribulose 1-phosphate = 5-methylsulfanyl-2,3-dioxopentyl phosphate + H2O. It participates in amino-acid biosynthesis; L-methionine biosynthesis via salvage pathway; L-methionine from S-methyl-5-thio-alpha-D-ribose 1-phosphate: step 2/6. Functionally, catalyzes the dehydration of methylthioribulose-1-phosphate (MTRu-1-P) into 2,3-diketo-5-methylthiopentyl-1-phosphate (DK-MTP-1-P). The protein is Methylthioribulose-1-phosphate dehydratase of Saccharomyces cerevisiae (strain AWRI1631) (Baker's yeast).